Reading from the N-terminus, the 290-residue chain is Fructose-1,6-bisphosphatase class 1 (290 aa).

Mg(2+) is bound by residues E78, D96, L98, and D99. Residues 99–102 (DGSS), Y201, and K226 contribute to the substrate site. E232 provides a ligand contact to Mg(2+).

The protein belongs to the FBPase class 1 family. In terms of assembly, homotetramer. The cofactor is Mg(2+).

It is found in the cytoplasm. The enzyme catalyses beta-D-fructose 1,6-bisphosphate + H2O = beta-D-fructose 6-phosphate + phosphate. It participates in carbohydrate biosynthesis; gluconeogenesis. The chain is Fructose-1,6-bisphosphatase class 1 from Helicobacter pylori (strain Shi470).